The following is a 381-amino-acid chain: Testis-specific expressed protein 55 (381 aa).

Disordered stretches follow at residues 1–176 (MDEP…SDPH) and 292–317 (TTEY…QSSR). Composition is skewed to basic and acidic residues over residues 8 to 24 (SLNH…EKNN) and 65 to 103 (RTSE…ERRT). Residues 104–113 (SQPPNQQLPS) show a composition bias toward polar residues. Basic and acidic residues predominate over residues 114–125 (HSERKTSGKIDG). A compositionally biased stretch (acidic residues) spans 134-143 (TDQETSEFDD). Composition is skewed to polar residues over residues 147-163 (SAST…QEYN) and 292-302 (TTEYTSDTTPV). Low complexity predominate over residues 307–317 (RSSQRSSQSSR).

As to expression, testis-specific.

It is found in the nucleus. This Mus musculus (Mouse) protein is Testis-specific expressed protein 55.